Here is a 539-residue protein sequence, read N- to C-terminus: Hydroxylamine reductase (539 aa).

The [4Fe-4S] cluster site is built by cysteine 3, cysteine 6, cysteine 15, and cysteine 21. Residues histidine 235, glutamate 259, cysteine 303, cysteine 394, cysteine 422, cysteine 447, glutamate 482, and lysine 484 each coordinate hybrid [4Fe-2O-2S] cluster. Residue cysteine 394 is modified to Cysteine persulfide.

Belongs to the HCP family. [4Fe-4S] cluster is required as a cofactor. It depends on hybrid [4Fe-2O-2S] cluster as a cofactor.

It localises to the cytoplasm. It catalyses the reaction A + NH4(+) + H2O = hydroxylamine + AH2 + H(+). Its function is as follows. Catalyzes the reduction of hydroxylamine to form NH(3) and H(2)O. This chain is Hydroxylamine reductase, found in Methanocaldococcus jannaschii (strain ATCC 43067 / DSM 2661 / JAL-1 / JCM 10045 / NBRC 100440) (Methanococcus jannaschii).